The sequence spans 581 residues: Probable hexosyltransferase MUCI70 (581 aa).

Topologically, residues Met1 to Lys58 are cytoplasmic. Residues Val59–Gly79 traverse the membrane as a helical; Signal-anchor for type II membrane protein segment. Over Lys80–Ala581 the chain is Lumenal. Residues Asn96, Asn102, Asn119, Asn194, Asn224, Asn285, Asn382, Asn411, and Asn488 are each glycosylated (N-linked (GlcNAc...) asparagine). Residues Arg514 to Ala581 form a disordered region. The segment covering Pro520–Val536 has biased composition (pro residues). Over residues Pro553–Ala571 the composition is skewed to basic residues.

The protein belongs to the glycosyltransferase 8 family. In terms of tissue distribution, expressed in siliques and seeds.

It localises to the golgi apparatus membrane. Its pathway is glycan metabolism; pectin biosynthesis. Its function is as follows. Probable glycosyltransferase involved in pectin and/or xylans biosynthesis in cell walls. Together with IRX14, required for xylan and pectin synthesis in seed coat epidermal (SCE) cells. Collaboratively with GAUT11, essential for the accumulation of seed mucilage, a gelatinous wall rich in unbranched rhamnogalacturonan I (RG I), and for shaping the surface morphology of seeds. This is Probable hexosyltransferase MUCI70 from Arabidopsis thaliana (Mouse-ear cress).